The chain runs to 449 residues: UDP-N-acetylmuramate--L-alanine ligase (449 aa).

113–119 (GSHGKTT) provides a ligand contact to ATP.

This sequence belongs to the MurCDEF family.

The protein localises to the cytoplasm. It carries out the reaction UDP-N-acetyl-alpha-D-muramate + L-alanine + ATP = UDP-N-acetyl-alpha-D-muramoyl-L-alanine + ADP + phosphate + H(+). The protein operates within cell wall biogenesis; peptidoglycan biosynthesis. Functionally, cell wall formation. The protein is UDP-N-acetylmuramate--L-alanine ligase of Hydrogenobaculum sp. (strain Y04AAS1).